The following is an 855-amino-acid chain: DNA polymerase (855 aa).

One can recognise a 3'-5' exonuclease domain in the interval 107 to 332 (KPEMKPVFDA…LHNFFLPKIE (226 aa)). Residues 333–833 (KNEKLCSLYY…MDKEHPDHSK (501 aa)) form a polymerase region.

The protein belongs to the DNA polymerase type-A family. As to quaternary structure, single-chain monomer with multiple functions.

It catalyses the reaction DNA(n) + a 2'-deoxyribonucleoside 5'-triphosphate = DNA(n+1) + diphosphate. Functionally, replicates the viral genomic DNA. This polymerase possesses two enzymatic activities: DNA synthesis (polymerase) and an exonucleolytic activity that degrades single-stranded DNA in the 3'-5' direction for proofreading purpose. The DNA synthesis very likely occurs by strand displacement. In Escherichia phage T5 (Enterobacteria phage T5), this protein is DNA polymerase.